The primary structure comprises 172 residues: Small ribosomal subunit protein uS5 (172 aa).

The S5 DRBM domain maps to 7 to 70 (VVEHLVNVNR…QNAKKYMIEV (64 aa)).

It belongs to the universal ribosomal protein uS5 family. In terms of assembly, part of the 30S ribosomal subunit. Contacts proteins S4 and S8.

Functionally, with S4 and S12 plays an important role in translational accuracy. In terms of biological role, located at the back of the 30S subunit body where it stabilizes the conformation of the head with respect to the body. This is Small ribosomal subunit protein uS5 from Orientia tsutsugamushi (strain Boryong) (Rickettsia tsutsugamushi).